A 283-amino-acid polypeptide reads, in one-letter code: Malonyl-[acyl-carrier protein] O-methyltransferase (283 aa).

The protein belongs to the methyltransferase superfamily.

It catalyses the reaction malonyl-[ACP] + S-adenosyl-L-methionine = malonyl-[ACP] methyl ester + S-adenosyl-L-homocysteine. Its pathway is cofactor biosynthesis; biotin biosynthesis. Functionally, converts the free carboxyl group of a malonyl-thioester to its methyl ester by transfer of a methyl group from S-adenosyl-L-methionine (SAM). It allows to synthesize pimeloyl-ACP via the fatty acid synthetic pathway. This is Malonyl-[acyl-carrier protein] O-methyltransferase from Acetivibrio thermocellus (strain ATCC 27405 / DSM 1237 / JCM 9322 / NBRC 103400 / NCIMB 10682 / NRRL B-4536 / VPI 7372) (Clostridium thermocellum).